The chain runs to 349 residues: Small ribosomal subunit biogenesis GTPase RsgA (349 aa).

Basic residues predominate over residues 1 to 11 (MSKKKLSKGQQ). Residues 1-29 (MSKKKLSKGQQRRVSANHQRRLKKTESKV) form a disordered region. A CP-type G domain is found at 102–272 (HSVLTRPDYY…VIDSPGVREF (171 aa)). GTP-binding positions include 158-161 (NKID) and 212-220 (GQSGVGKSS). Zn(2+) contacts are provided by Cys296, Cys301, His303, and Cys309.

The protein belongs to the TRAFAC class YlqF/YawG GTPase family. RsgA subfamily. In terms of assembly, monomer. Associates with 30S ribosomal subunit, binds 16S rRNA. It depends on Zn(2+) as a cofactor.

Its subcellular location is the cytoplasm. One of several proteins that assist in the late maturation steps of the functional core of the 30S ribosomal subunit. Helps release RbfA from mature subunits. May play a role in the assembly of ribosomal proteins into the subunit. Circularly permuted GTPase that catalyzes slow GTP hydrolysis, GTPase activity is stimulated by the 30S ribosomal subunit. In Pectobacterium carotovorum subsp. carotovorum (strain PC1), this protein is Small ribosomal subunit biogenesis GTPase RsgA.